We begin with the raw amino-acid sequence, 485 residues long: MTITPQNLIALLPLLIVGLTVVVVMLSIAWRRNHFLNATLSVIGLNAALVSLWFVGQAGAMDVTPLMRVDGFAMLYTGLVLLASLATCTFAYPWLEGYNDNKDEFYLLVLIAALGGILLANANHLASLFLGIELISLPLFGLVGYAFRQKRSLEASIKYTILSAAASSFLLFGMALVYAQSGDLSFVALGKNLGDGMLNEPLLLAGFGLMIVGLGFKLSLVPFHLWTPDVYQGAPAPVSTFLATASKIAIFGVVMRLFLYAPVGDSEAIRVVLAIIAFASIIFGNLMALSQTNIKRLLGYSSISHLGYLLVALIALQTGEMSMEAVGVYLAGYLFSSLGAFGVVSLMSSPYRGPDADSLFSYRGLFWHRPILAAVMTVMMLSLAGIPMTLGFIGKFYVLAVGVQTHLWWLVGAVVVGSAIGLYYYLRVAVSLYLHAPEQPGRDAPSNWQYSAGGIVVLISALLVLVLGVWPQPLISIVRLAMPLM.

14 consecutive transmembrane segments (helical) span residues 8–28 (LIALLPLLIVGLTVVVVMLSI), 35–55 (FLNATLSVIGLNAALVSLWFV), 71–91 (GFAMLYTGLVLLASLATCTFA), 105–125 (FYLLVLIAALGGILLANANHL), 127–147 (SLFLGIELISLPLFGLVGYAF), 159–179 (YTILSAAASSFLLFGMALVYA), 203–223 (LLAGFGLMIVGLGFKLSLVPF), 235–255 (PAPVSTFLATASKIAIFGVVM), 271–291 (VVLAIIAFASIIFGNLMALSQ), 297–317 (LLGYSSISHLGYLLVALIALQ), 326–346 (VGVYLAGYLFSSLGAFGVVSL), 373–393 (AAVMTVMMLSLAGIPMTLGFI), 408–430 (WWLVGAVVVGSAIGLYYYLRVAV), and 455–475 (IVVLISALLVLVLGVWPQPLI).

Belongs to the complex I subunit 2 family. NDH-1 is composed of 13 different subunits. Subunits NuoA, H, J, K, L, M, N constitute the membrane sector of the complex.

The protein localises to the cell inner membrane. The enzyme catalyses a quinone + NADH + 5 H(+)(in) = a quinol + NAD(+) + 4 H(+)(out). Its function is as follows. NDH-1 shuttles electrons from NADH, via FMN and iron-sulfur (Fe-S) centers, to quinones in the respiratory chain. The immediate electron acceptor for the enzyme in this species is believed to be ubiquinone. Couples the redox reaction to proton translocation (for every two electrons transferred, four hydrogen ions are translocated across the cytoplasmic membrane), and thus conserves the redox energy in a proton gradient. The sequence is that of NADH-quinone oxidoreductase subunit N from Escherichia coli (strain ATCC 8739 / DSM 1576 / NBRC 3972 / NCIMB 8545 / WDCM 00012 / Crooks).